Consider the following 273-residue polypeptide: Ribosomal RNA small subunit methyltransferase A (273 aa).

S-adenosyl-L-methionine is bound by residues histidine 10, leucine 12, glycine 37, glutamate 58, aspartate 83, and asparagine 108.

Belongs to the class I-like SAM-binding methyltransferase superfamily. rRNA adenine N(6)-methyltransferase family. RsmA subfamily.

It is found in the cytoplasm. It carries out the reaction adenosine(1518)/adenosine(1519) in 16S rRNA + 4 S-adenosyl-L-methionine = N(6)-dimethyladenosine(1518)/N(6)-dimethyladenosine(1519) in 16S rRNA + 4 S-adenosyl-L-homocysteine + 4 H(+). Its function is as follows. Specifically dimethylates two adjacent adenosines (A1518 and A1519) in the loop of a conserved hairpin near the 3'-end of 16S rRNA in the 30S particle. May play a critical role in biogenesis of 30S subunits. This chain is Ribosomal RNA small subunit methyltransferase A, found in Picosynechococcus sp. (strain ATCC 27264 / PCC 7002 / PR-6) (Agmenellum quadruplicatum).